The chain runs to 938 residues: Breast cancer type 2 susceptibility protein homolog (938 aa).

2 stretches are compositionally biased toward basic and acidic residues: residues 320 to 339 (LEPSFQKEQKSSKDSNESKI) and 409 to 425 (NSIKRTDEEQPEKETPN). Disordered stretches follow at residues 320 to 359 (LEPSFQKEQKSSKDSNESKIRAPSKPSCDITEKNEGTTVL) and 409 to 434 (NSIKRTDEEQPEKETPNKSRSTSSHQ). BRCA2 repeat units lie at residues 537 to 571 (AEPEFCGFRTASNKAIPISEKMKIKTAEFMAEFQY), 638 to 672 (NEPQFFGFRTASKKAIEITEAMEKRGAMFLAQSRA), and 713 to 747 (SETEFFGFRTASNKGIVISENTKMKVAQFMSEFQA). Residues 870–879 (SSTETSTSCA) are compositionally biased toward polar residues. Residues 870–938 (SSTETSTSCA…RRLGLSRSRY (69 aa)) are disordered. Residues 898-915 (ADRDLNRSKDCAKNRQDA) show a composition bias toward basic and acidic residues. Positions 926–938 (KKSRRLGLSRSRY) are enriched in basic residues.

Interacts with Rad9 and spn-A/Rad51.

It localises to the nucleus. In terms of biological role, involved in and required for double-strand break repair by meiotic and mitotic homologous recombination. During meiosis, has a dual role in the repair of meiotic double-stranded breaks and the efficient activation of the meiotic recombination checkpoint. This is Breast cancer type 2 susceptibility protein homolog from Drosophila sechellia (Fruit fly).